We begin with the raw amino-acid sequence, 581 residues long: Major facilitator superfamily multidrug transporter NAG4 (581 aa).

The span at 1–14 shows a compositional bias: polar residues; it reads MSHATDSTLDNASV. Positions 1 to 43 are disordered; it reads MSHATDSTLDNASVDSEKVRDFGDDLQNHPVQPTRSILSKIRS. Asn11 is a glycosylation site (N-linked (GlcNAc...) asparagine). Over residues 15–27 the composition is skewed to basic and acidic residues; that stretch reads DSEKVRDFGDDLQ. Asn125 carries an N-linked (GlcNAc...) asparagine glycan. Transmembrane regions (helical) follow at residues 132-152, 169-189, 199-219, 230-250, 261-281, 290-310, 365-385, 403-423, 447-467, 471-491, 510-530, and 544-564; these read WLYT…SAIV, VIIL…PLVF, KPIY…CGAA, LIDG…LADI, AIFS…GGLL, WIYW…IAIV, IVFL…MFFF, GVMF…APFF, LIPM…FAWS, WVSW…FCCL, ALAA…LFTI, and LMAF…FFGA.

The protein belongs to the major facilitator superfamily. DHA1 family. Polyamines/proton antiporter (TC 2.A.1.2.16) subfamily.

The protein localises to the cell membrane. In terms of biological role, MFS transporter involved in N-acetylglucosamine (GlcNAc) uptake. Confers resistance to cycloheximide, 4-nitroquinoline-N-oxide, and 1,10-phenanthroline, and contributes to virulence. The chain is Major facilitator superfamily multidrug transporter NAG4 from Candida albicans (strain SC5314 / ATCC MYA-2876) (Yeast).